A 208-amino-acid chain; its full sequence is N-(5'-phosphoribosyl)anthranilate isomerase (208 aa).

This sequence belongs to the TrpF family.

It catalyses the reaction N-(5-phospho-beta-D-ribosyl)anthranilate = 1-(2-carboxyphenylamino)-1-deoxy-D-ribulose 5-phosphate. Its pathway is amino-acid biosynthesis; L-tryptophan biosynthesis; L-tryptophan from chorismate: step 3/5. The protein is N-(5'-phosphoribosyl)anthranilate isomerase of Dechloromonas aromatica (strain RCB).